The chain runs to 43 residues: MSLLLAKLPEAYAPFDPIVDVLPIIPVLFLLLAFVWQASVSFR.

Positions 1–6 (MSLLLA) are excised as a propeptide. Residues 18–38 (IVDVLPIIPVLFLLLAFVWQA) form a helical membrane-spanning segment.

This sequence belongs to the PsbK family. As to quaternary structure, PSII is composed of 1 copy each of membrane proteins PsbA, PsbB, PsbC, PsbD, PsbE, PsbF, PsbH, PsbI, PsbJ, PsbK, PsbL, PsbM, PsbT, PsbX, PsbY, PsbZ, Psb30/Ycf12, at least 3 peripheral proteins of the oxygen-evolving complex and a large number of cofactors. It forms dimeric complexes.

The protein resides in the plastid. Its subcellular location is the chloroplast thylakoid membrane. One of the components of the core complex of photosystem II (PSII). PSII is a light-driven water:plastoquinone oxidoreductase that uses light energy to abstract electrons from H(2)O, generating O(2) and a proton gradient subsequently used for ATP formation. It consists of a core antenna complex that captures photons, and an electron transfer chain that converts photonic excitation into a charge separation. The sequence is that of Photosystem II reaction center protein K from Oltmannsiellopsis viridis (Marine flagellate).